The following is a 107-amino-acid chain: Thiosulfate sulfurtransferase GlpE (107 aa).

Residues 17 to 105 form the Rhodanese domain; sequence RQGEAVLVDI…WLKAFPLETE (89 aa). The active-site Cysteine persulfide intermediate is the cysteine 65.

It belongs to the GlpE family.

Its subcellular location is the cytoplasm. The catalysed reaction is thiosulfate + hydrogen cyanide = thiocyanate + sulfite + 2 H(+). The enzyme catalyses thiosulfate + [thioredoxin]-dithiol = [thioredoxin]-disulfide + hydrogen sulfide + sulfite + 2 H(+). Functionally, transferase that catalyzes the transfer of sulfur from thiosulfate to thiophilic acceptors such as cyanide or dithiols. May function in a CysM-independent thiosulfate assimilation pathway by catalyzing the conversion of thiosulfate to sulfite, which can then be used for L-cysteine biosynthesis. This chain is Thiosulfate sulfurtransferase GlpE, found in Sodalis glossinidius (strain morsitans).